The chain runs to 718 residues: Catalase-peroxidase 1 (718 aa).

The segment at residues Trp-93 to Tyr-221 is a cross-link (tryptophyl-tyrosyl-methioninium (Trp-Tyr) (with M-247)). The Proton acceptor role is filled by His-94. The tryptophyl-tyrosyl-methioninium (Tyr-Met) (with W-93) cross-link spans Tyr-221 to Met-247. Residue His-262 participates in heme b binding.

Belongs to the peroxidase family. Peroxidase/catalase subfamily. In terms of assembly, homodimer or homotetramer. It depends on heme b as a cofactor. In terms of processing, formation of the three residue Trp-Tyr-Met cross-link is important for the catalase, but not the peroxidase activity of the enzyme.

It catalyses the reaction H2O2 + AH2 = A + 2 H2O. The enzyme catalyses 2 H2O2 = O2 + 2 H2O. Bifunctional enzyme with both catalase and broad-spectrum peroxidase activity. The polypeptide is Catalase-peroxidase 1 (Shewanella amazonensis (strain ATCC BAA-1098 / SB2B)).